A 495-amino-acid chain; its full sequence is uncharacterized protein (495 aa).

FAD is bound by residues serine 16, glutamate 36, tryptophan 45, aspartate 56, tyrosine 62, and valine 105.

This sequence belongs to the FAD-binding monooxygenase family. Requires FAD as cofactor.

This is an uncharacterized protein from Mycobacterium tuberculosis (strain CDC 1551 / Oshkosh).